A 4749-amino-acid polypeptide reads, in one-letter code: E3 ubiquitin-protein ligase MYCBP2 (4749 aa).

3 disordered regions span residues 87–127, 170–192, and 609–628; these read DRDQ…RSKS, AASK…SREP, and ASKG…KPYK. Residues 100–124 are compositionally biased toward basic residues; that stretch reads SRNKKILNKKKLKRKQKSKSKVKTR. Phosphoserine is present on residues serine 127, serine 178, serine 181, and serine 183. RCC1 repeat units lie at residues 600–655, 699–755, 907–957, 958–1009, and 1011–1066; these read DGSV…VISK, NGEV…MMCP, KRDK…VLME, NGDV…LLMD, and QVFT…LRID. Residues 899 to 910 are compositionally biased toward basic residues; it reads SHPAQLKHKRDK. Positions 899–928 are disordered; that stretch reads SHPAQLKHKRDKHKDGSGDRGEKDASKITT. Residues 911–924 are compositionally biased toward basic and acidic residues; that stretch reads HKDGSGDRGEKDAS. The segment at 1235 to 1386 is PHR domain 1; the sequence is NRFESHGGGW…GQIPQLLYRL (152 aa). Serine 1621 bears the Phosphoserine mark. Residues 1723–1881 form a PHR domain 2 region; it reads NRFTKTSQGR…GQIPQILYYR (159 aa). Cysteine 1745 and cysteine 1860 are joined by a disulfide. The interval 2018–2544 is RAE1 binding; it reads AVIESEHPYK…FNQHLGKSLL (527 aa). 2 disordered regions span residues 2313–2336 and 2780–3084; these read KKTS…SAAA and QQRQ…KGDG. A Filamin repeat occupies 2331–2438; it reads SPSAAASSAD…IDAGLEVKVK (108 aa). Polar residues predominate over residues 2780-2803; it reads QQRQLQSDRGTISTSSRPVSTSGK. The span at 2814–2832 shows a compositional bias: basic and acidic residues; it reads VKPDGHVSRTPADQKKPRG. Serine 2841 is subject to Phosphoserine. The span at 2847–2857 shows a compositional bias: basic and acidic residues; the sequence is DAAKLRSDSHS. Polar residues predominate over residues 2858 to 2879; the sequence is RSLSPNHNTLQTLKSDGRTSSG. Phosphoserine is present on residues serine 2859 and serine 2861. Composition is skewed to low complexity over residues 2884–2894 and 2904–2917; these read SPGPGSRSSSP and SSPS…SSSP. Residues serine 2905 and serine 2911 each carry the phosphoserine modification. The span at 2918–2929 shows a compositional bias: polar residues; that stretch reads QDKNLPQKSTAP. The segment covering 2932–2943 has biased composition (basic and acidic residues); the sequence is TKLDPPRERSKS. A phosphoserine mark is found at serine 2941, serine 2943, and serine 2992. Polar residues predominate over residues 3008–3021; the sequence is CTSSTLKTNGVTDS. Composition is skewed to basic and acidic residues over residues 3027-3037 and 3047-3056; these read GDLKSVDEGSN and PLKDEQEMRA. Residue serine 3057 is modified to Phosphoserine. Positions 3060–3073 are enriched in basic residues; the sequence is ISRKCANRHTRPKK. Serine 3162, serine 3550, and serine 3577 each carry phosphoserine. Residues 3677–3700 are disordered; sequence VEAEEDEDEDNKSNKENAEQEKDT. Positions 3687–3700 are enriched in basic and acidic residues; that stretch reads NKSNKENAEQEKDT. The DOC domain maps to 3789 to 3967; the sequence is FSISVQSGFE…SVAQQRSCEA (179 aa). Residues 3986 to 4007 are disordered; it reads SGDAEPTPEQEEKALLSSPEGE. Threonine 3992 carries the phosphothreonine modification. Residues serine 4002 and serine 4003 each carry the phosphoserine modification. Zn(2+) contacts are provided by cysteine 4499, cysteine 4502, cysteine 4517, histidine 4519, histidine 4522, cysteine 4525, cysteine 4546, cysteine 4549, cysteine 4615, and cysteine 4618. The RING-type; atypical zinc-finger motif lies at 4499 to 4550; that stretch reads CMICFTEALSAAPAIQLDCSHVFHLQCCRRVLENRWLGPRITFGFISCPICK. A tandem cysteine domain region spans residues 4610–4747; the sequence is YAYYVCYKCR…LGCGVCRNAH (138 aa). Cysteine 4629 is a catalytic residue. Cysteine 4646, cysteine 4649, cysteine 4658, histidine 4661, cysteine 4670, cysteine 4673, and cysteine 4674 together coordinate Zn(2+). Cysteine 4681 is an active-site residue. Zn(2+) is bound by residues cysteine 4688, cysteine 4691, cysteine 4709, cysteine 4723, histidine 4729, cysteine 4740, and cysteine 4743.

It belongs to the RING-Cys relay (RCR) family. Interacts with MYC. Interacts with TSC2 (tuberin) when TSC2 is in complex with TSC1 (hamartin). Interacts with FBXO45. Interacts with RAE1. Interacts with CPNE1 (via VWFA domain) and CPNE4 (via VWFA domain). Interacts with (sumoylated) RANGAP1; interaction with sumoylated RANGAP1 inhibits E3 ubiquitin-protein ligase activity and promotes MYCBP2 translocation to the nucleus. Interacts with RAN. Interacts with ATP13A2; the interaction inhibits the ubiquitination of TSC2 by MYCBP2. Interacts with USP11. Autoubiquitinated. In terms of tissue distribution, expression is mostly restricted to the nervous system, including expression in motor and sensory axons. During postnatal development, expression is particularly strong in the cerebellum, hippocampus and retina. Lower levels of expression are observed throughout the cerebral cortex.

The protein localises to the nucleus. The protein resides in the cell projection. It is found in the axon. It localises to the cytoplasm. Its subcellular location is the cytoskeleton. The enzyme catalyses [E2 ubiquitin-conjugating enzyme]-S-ubiquitinyl-L-cysteine + [acceptor protein]-L-threonine = [E2 ubiquitin-conjugating enzyme]-L-cysteine + [acceptor protein]-3-O-ubiquitinyl-L-threonine.. Its pathway is protein modification; protein ubiquitination. Atypical E3 ubiquitin-protein ligase which specifically mediates ubiquitination of threonine and serine residues on target proteins, instead of ubiquitinating lysine residues. Shows esterification activity towards both threonine and serine, with a preference for threonine, and acts via two essential catalytic cysteine residues that relay ubiquitin to its substrate via thioester intermediates. Interacts with the E2 enzymes UBE2D1, UBE2D3, UBE2E1 and UBE2L3. Plays a key role in neural development, probably by mediating ubiquitination of threonine residues on target proteins. Involved in different processes such as regulation of neurite outgrowth, synaptic growth, synaptogenesis and axon degeneration. Required for the formation of major central nervous system axon tracts. Required for proper axon growth by regulating axon navigation and axon branching: acts by regulating the subcellular location and stability of MAP3K12/DLK. Required for proper localization of retinogeniculate projections but not for eye-specific segregation. Regulates axon guidance in the olfactory system. Involved in Wallerian axon degeneration, an evolutionarily conserved process that drives the loss of damaged axons: acts by promoting destabilization of NMNAT2, probably via ubiquitination of NMNAT2. Catalyzes ubiquitination of threonine and/or serine residues on NMNAT2, consequences of threonine and/or serine ubiquitination are however unknown. Regulates the internalization of TRPV1 in peripheral sensory neurons. May mediate ubiquitination and subsequent proteasomal degradation of TSC2/tuberin. Independently of the E3 ubiquitin-protein ligase activity, also acts as a guanosine exchange factor (GEF) for RAN in neurons of dorsal root ganglia. May function as a facilitator or regulator of transcriptional activation by MYC. Acts in concert with HUWE1 to regulate the circadian clock gene expression by promoting the lithium-induced ubiquination and degradation of NR1D1. The protein is E3 ubiquitin-protein ligase MYCBP2 of Mus musculus (Mouse).